The primary structure comprises 162 residues: SsrA-binding protein (162 aa).

Residues 137 to 154 (HDKREDTKAREWDREKAR) are compositionally biased toward basic and acidic residues. Residues 137-162 (HDKREDTKAREWDREKARIMKNKHRG) are disordered.

The protein belongs to the SmpB family.

Its subcellular location is the cytoplasm. Functionally, required for rescue of stalled ribosomes mediated by trans-translation. Binds to transfer-messenger RNA (tmRNA), required for stable association of tmRNA with ribosomes. tmRNA and SmpB together mimic tRNA shape, replacing the anticodon stem-loop with SmpB. tmRNA is encoded by the ssrA gene; the 2 termini fold to resemble tRNA(Ala) and it encodes a 'tag peptide', a short internal open reading frame. During trans-translation Ala-aminoacylated tmRNA acts like a tRNA, entering the A-site of stalled ribosomes, displacing the stalled mRNA. The ribosome then switches to translate the ORF on the tmRNA; the nascent peptide is terminated with the 'tag peptide' encoded by the tmRNA and targeted for degradation. The ribosome is freed to recommence translation, which seems to be the essential function of trans-translation. The chain is SsrA-binding protein from Aeromonas salmonicida (strain A449).